The sequence spans 183 residues: Threonylcarbamoyl-AMP synthase (183 aa).

The 183-residue stretch at 1–183 (MNREQIADAL…LRTNQLFRQG (183 aa)) folds into the YrdC-like domain.

The protein belongs to the SUA5 family. TsaC subfamily.

The protein resides in the cytoplasm. The catalysed reaction is L-threonine + hydrogencarbonate + ATP = L-threonylcarbamoyladenylate + diphosphate + H2O. In terms of biological role, required for the formation of a threonylcarbamoyl group on adenosine at position 37 (t(6)A37) in tRNAs that read codons beginning with adenine. Catalyzes the conversion of L-threonine, HCO(3)(-)/CO(2) and ATP to give threonylcarbamoyl-AMP (TC-AMP) as the acyladenylate intermediate, with the release of diphosphate. This is Threonylcarbamoyl-AMP synthase from Haemophilus influenzae (strain ATCC 51907 / DSM 11121 / KW20 / Rd).